Reading from the N-terminus, the 335-residue chain is Cut9-interacting protein scn1 (335 aa).

The protein belongs to the metallo-dependent hydrolases superfamily.

Its function is as follows. Interacts with cut9. This chain is Cut9-interacting protein scn1 (scn1), found in Schizosaccharomyces pombe (strain 972 / ATCC 24843) (Fission yeast).